A 304-amino-acid polypeptide reads, in one-letter code: Dermonecrotic toxin LiSicTox-betaIA1ii (304 aa).

The N-terminal stretch at 1-21 is a signal peptide; the sequence is MLLCAVISFIVYAVFLQEANG. The propeptide occupies 22-26; that stretch reads HAAER. Residue His-38 is part of the active site. 2 residues coordinate Mg(2+): Glu-58 and Asp-60. The active-site Nucleophile is the His-74. 2 disulfide bridges follow: Cys-78/Cys-84 and Cys-80/Cys-223. Asp-118 is a binding site for Mg(2+).

This sequence belongs to the arthropod phospholipase D family. Class II subfamily. Requires Mg(2+) as cofactor. Expressed by the venom gland.

The protein resides in the secreted. It carries out the reaction an N-(acyl)-sphingosylphosphocholine = an N-(acyl)-sphingosyl-1,3-cyclic phosphate + choline. The catalysed reaction is an N-(acyl)-sphingosylphosphoethanolamine = an N-(acyl)-sphingosyl-1,3-cyclic phosphate + ethanolamine. It catalyses the reaction a 1-acyl-sn-glycero-3-phosphocholine = a 1-acyl-sn-glycero-2,3-cyclic phosphate + choline. The enzyme catalyses a 1-acyl-sn-glycero-3-phosphoethanolamine = a 1-acyl-sn-glycero-2,3-cyclic phosphate + ethanolamine. In terms of biological role, dermonecrotic toxins cleave the phosphodiester linkage between the phosphate and headgroup of certain phospholipids (sphingolipid and lysolipid substrates), forming an alcohol (often choline) and a cyclic phosphate. This toxin acts on sphingomyelin (SM) with low activity. It may also act on ceramide phosphoethanolamine (CPE), lysophosphatidylcholine (LPC) and lysophosphatidylethanolamine (LPE), but not on lysophosphatidylserine (LPS), and lysophosphatidylglycerol (LPG). It acts by transphosphatidylation, releasing exclusively cyclic phosphate products as second products. Induces dermonecrosis, hemolysis, increased vascular permeability, edema, inflammatory response, and platelet aggregation. This chain is Dermonecrotic toxin LiSicTox-betaIA1ii, found in Loxosceles intermedia (Brown spider).